The primary structure comprises 450 residues: Malate:quinone oxidoreductase (450 aa).

This sequence belongs to the MQO family. FAD is required as a cofactor.

It localises to the cell membrane. It catalyses the reaction (S)-malate + a quinone = a quinol + oxaloacetate. Its pathway is carbohydrate metabolism; tricarboxylic acid cycle; oxaloacetate from (S)-malate (quinone route): step 1/1. Functionally, catalyzes oxidation of malate to oxaloacetate in the citric acid cycle. Donates electrons to quinones of the electron transfer chain. The polypeptide is Malate:quinone oxidoreductase (mqo) (Helicobacter pylori (strain ATCC 700392 / 26695) (Campylobacter pylori)).